A 214-amino-acid polypeptide reads, in one-letter code: Small ribosomal subunit protein uS5 (214 aa).

One can recognise an S5 DRBM domain in the interval 55–118 (LKYERLDVGI…RNAKLNITPV (64 aa)).

This sequence belongs to the universal ribosomal protein uS5 family. Part of the 30S ribosomal subunit. Contacts protein S4.

In terms of biological role, with S4 and S12 plays an important role in translational accuracy. The polypeptide is Small ribosomal subunit protein uS5 (Staphylothermus marinus (strain ATCC 43588 / DSM 3639 / JCM 9404 / F1)).